Consider the following 395-residue polypeptide: Multidrug resistance protein MdtL (395 aa).

Residues 1–3 lie on the Cytoplasmic side of the membrane; the sequence is MKR. Residues 4–24 traverse the membrane as a helical segment; that stretch reads FLLCSFALVLLYPAGIDMYLV. Residues 25-41 lie on the Periplasmic side of the membrane; it reads GLPRIAADLNASEAQLH. A helical transmembrane segment spans residues 42–62; sequence IAFSVYLAGMATAMLFAGKIA. Over 63–68 the chain is Cytoplasmic; it reads DQSGRK. Residues 69-89 traverse the membrane as a helical segment; the sequence is PVAIVGAIVFMMASLLCSRAS. The Periplasmic segment spans residues 90–92; that stretch reads EGS. A helical transmembrane segment spans residues 93–113; sequence LFLSGRFLQGVGAGGCYVVAF. Residues 114-130 lie on the Cytoplasmic side of the membrane; the sequence is AILRDTLDEHRRAKVLS. The helical transmembrane segment at 131–151 threads the bilayer; the sequence is LLNGITCIVPVLAPVMGHLIM. The Periplasmic segment spans residues 152–157; sequence LRFPWQ. A helical transmembrane segment spans residues 158-178; sequence SLFYTMSTMGIMVGLLSLFIL. The Cytoplasmic portion of the chain corresponds to 179 to 216; sequence RETRPARLAPRDLSPSSSAAESLVNRFFVSRLAITTLS. The helical transmembrane segment at 217–237 threads the bilayer; it reads VSVILTFVNASPVLLMEVMGF. Residues 238 to 246 lie on the Periplasmic side of the membrane; sequence SRGDYAITM. The helical transmembrane segment at 247-267 threads the bilayer; it reads ALTAGVSMVVSFSTPFALGLF. Topologically, residues 268-270 are cytoplasmic; that stretch reads KPR. The chain crosses the membrane as a helical span at residues 271 to 291; sequence TLMLVSQGLFLTAGVTLSLAH. The Periplasmic segment spans residues 292-294; the sequence is TNT. The chain crosses the membrane as a helical span at residues 295-315; the sequence is VTLFGLTLICAGFSVGFGVAM. Topologically, residues 316–332 are cytoplasmic; sequence SQALGPFSLRAGVASST. The chain crosses the membrane as a helical span at residues 333–353; sequence LGIAQVCGSSLWIWLAAILGI. Topologically, residues 354 to 357 are periplasmic; it reads SAMN. A helical transmembrane segment spans residues 358–378; sequence MLIGILIGCSIVSILLIFSVA. Topologically, residues 379–395 are cytoplasmic; sequence PNRSVAEHEEIPYQSRS.

It belongs to the major facilitator superfamily. DHA1 family. MdtL (TC 2.A.1.2.22) subfamily.

Its subcellular location is the cell inner membrane. The protein is Multidrug resistance protein MdtL (mdtL) of Salmonella typhi.